The sequence spans 432 residues: Phosphomethylpyrimidine synthase (432 aa).

Substrate-binding positions include N66, M95, Y124, H163, 185–187 (SRG), 226–229 (DGLR), and E265. H269 is a binding site for Zn(2+). Y292 contributes to the substrate binding site. Zn(2+) is bound at residue H333. [4Fe-4S] cluster-binding residues include C409, C412, and C416.

The protein belongs to the ThiC family. Requires [4Fe-4S] cluster as cofactor.

It carries out the reaction 5-amino-1-(5-phospho-beta-D-ribosyl)imidazole + S-adenosyl-L-methionine = 4-amino-2-methyl-5-(phosphooxymethyl)pyrimidine + CO + 5'-deoxyadenosine + formate + L-methionine + 3 H(+). The protein operates within cofactor biosynthesis; thiamine diphosphate biosynthesis. In terms of biological role, catalyzes the synthesis of the hydroxymethylpyrimidine phosphate (HMP-P) moiety of thiamine from aminoimidazole ribotide (AIR) in a radical S-adenosyl-L-methionine (SAM)-dependent reaction. The sequence is that of Phosphomethylpyrimidine synthase from Desulfitobacterium hafniense (strain DSM 10664 / DCB-2).